The following is a 1107-amino-acid chain: Phospholipid-transporting ATPase 2 (1107 aa).

Topologically, residues 1–33 (MKRFVYINDDEASKELCCDNRISNRKYTLWNFL) are cytoplasmic. A helical membrane pass occupies residues 34-55 (PKNLWEQFSRFMNQYFLLIACL). Residues 56 to 60 (QLWSL) lie on the Extracellular side of the membrane. The helical transmembrane segment at 61–83 (ITPVNPASTWGPLIFIFAVSASK) threads the bilayer. Topologically, residues 84–268 (EAWDDYHRYL…TAMDAMIDKL (185 aa)) are cytoplasmic. Residues 269–290 (TGAIFVFQIVVVLVLGIAGNVW) traverse the membrane as a helical segment. The Extracellular segment spans residues 291-315 (KDTEARKQWYVQYPEEAPWYELLVI). The helical transmembrane segment at 316-333 (PLRFELLCSIMIPISIKV) threads the bilayer. Residues 334 to 807 (SLDLVKGLYA…HGRYSYNRTA (474 aa)) are Cytoplasmic-facing. The active-site 4-aspartylphosphate intermediate is D381. D752 and D756 together coordinate Mg(2+). A helical membrane pass occupies residues 808-827 (FLSQYSFYKSLLICFIQIFF). Topologically, residues 828-841 (SFISGVSGTSLFNS) are extracellular. A helical transmembrane segment spans residues 842 to 860 (VSLMAYNVFYTSVPVLVSV). Topologically, residues 861 to 890 (IDKDLSEASVMQHPQILFYCQAGRLLNPST) are cytoplasmic. A helical transmembrane segment spans residues 891-912 (FAGWFGRSLFHAIIVFVITIHA). Topologically, residues 913–919 (YAYEKSE) are extracellular. The helical transmembrane segment at 920–942 (MEELGMVALSGCIWLQAFVVAQE) threads the bilayer. The Cytoplasmic segment spans residues 943 to 948 (TNSFTV). Residues 949-969 (LQHLSIWGNLVGFYAINFLFS) form a helical membrane-spanning segment. Residues 970–982 (AIPSSGMYTIMFR) lie on the Extracellular side of the membrane. Residues 983 to 1007 (LCSQPSYWITMFLIVGAGMGPIFAL) form a helical membrane-spanning segment. Residues 1008-1107 (KYFRYTYRPS…SGYTRNCKDN (100 aa)) lie on the Cytoplasmic side of the membrane. Positions 1048-1075 (DLSPISITQPKNRSPVYEPLLSDSPNAT) are disordered. S1050 is subject to Phosphoserine.

The protein belongs to the cation transport ATPase (P-type) (TC 3.A.3) family. Type IV subfamily. Interacts with ALIS1, ALIS3 and ALIS5 in a heterologous system.

Its subcellular location is the endoplasmic reticulum membrane. It is found in the prevacuolar compartment membrane. The catalysed reaction is ATP + H2O + phospholipidSide 1 = ADP + phosphate + phospholipidSide 2.. Its function is as follows. Involved in transport of phospholipids. Contributes to transmembrane flipping of lipids. Requires an interaction with a protein of the ALIS family for activity. Specific for phosphatidylserine and has no activity with lysolipid, phosphatidylcholine or phosphatidylethanolamine. In Arabidopsis thaliana (Mouse-ear cress), this protein is Phospholipid-transporting ATPase 2.